We begin with the raw amino-acid sequence, 32 residues long: Ranatuerin-2La (32 aa).

C27 and C32 are disulfide-bonded.

As to expression, expressed by the skin glands.

Its subcellular location is the secreted. Its function is as follows. Antibacterial activity against Gram-positive bacterium S.aureus and Gram-negative bacterium E.coli. Weak activity against C.albicans. The polypeptide is Ranatuerin-2La (Rana luteiventris (Columbia spotted frog)).